A 378-amino-acid polypeptide reads, in one-letter code: Mannitol-1-phosphate 5-dehydrogenase (378 aa).

Position 4–15 (4–15 (SVHFGAGNIGRG)) interacts with NAD(+).

Belongs to the mannitol dehydrogenase family.

The enzyme catalyses D-mannitol 1-phosphate + NAD(+) = beta-D-fructose 6-phosphate + NADH + H(+). The polypeptide is Mannitol-1-phosphate 5-dehydrogenase (Streptococcus pneumoniae (strain ATCC BAA-255 / R6)).